A 580-amino-acid polypeptide reads, in one-letter code: D-erythrulose kinase (580 aa).

A DhaK domain is found at 7–327 (DPARFTEDML…WAAPADTPAY (321 aa)). The Tele-hemiaminal-histidine intermediate role is filled by histidine 217. The segment at 329–360 (KGAAQQHVSGERRSEATARSASSGPKLAELSD) is disordered. One can recognise a DhaL domain in the interval 368–570 (RLVARAFDAM…LALCARTVAD (203 aa)). ATP is bound by residues 397-403 (DGDHGRG), 443-444 (TS), glycine 485, arginine 542, and 555-557 (DAG).

The catalysed reaction is D-erythrulose + ATP = D-erythrulose 4-phosphate + ADP + H(+). It participates in carbohydrate metabolism; erythritol degradation. It functions in the pathway carbohydrate metabolism; D-threitol degradation. Its function is as follows. Catalyzes the phosphorylation of D-erythrulose to D-erythrulose-4P. Involved in the degradation pathways of erythritol and D-threitol, that allow M.smegmatis to grow on these compounds as the sole carbon source. This Mycolicibacterium smegmatis (strain ATCC 700084 / mc(2)155) (Mycobacterium smegmatis) protein is D-erythrulose kinase.